We begin with the raw amino-acid sequence, 108 residues long: Glutaredoxin (108 aa).

The 101-residue stretch at leucine 3–alanine 103 folds into the Glutaredoxin domain. The cysteines at positions 23 and 26 are disulfide-linked.

The protein belongs to the glutaredoxin family. CPYC subfamily.

The protein localises to the cytoplasm. Its function is as follows. Has a glutathione-disulfide oxidoreductase activity in the presence of NADPH and glutathione reductase. Reduces low molecular weight disulfides and proteins. This is Glutaredoxin from Solanum lycopersicum (Tomato).